The sequence spans 318 residues: Malate dehydrogenase (318 aa).

Residues 10-15 (GGGQIG) and Asp-34 contribute to the NAD(+) site. Substrate is bound by residues Arg-83 and Arg-89. NAD(+)-binding positions include Asn-96 and 119–121 (ISN). Residues Asn-121 and Arg-152 each coordinate substrate. His-176 serves as the catalytic Proton acceptor.

The protein belongs to the LDH/MDH superfamily. MDH type 3 family.

It carries out the reaction (S)-malate + NAD(+) = oxaloacetate + NADH + H(+). Catalyzes the reversible oxidation of malate to oxaloacetate. The sequence is that of Malate dehydrogenase from Geotalea uraniireducens (strain Rf4) (Geobacter uraniireducens).